Here is a 352-residue protein sequence, read N- to C-terminus: Histidinol-phosphate aminotransferase (352 aa).

N6-(pyridoxal phosphate)lysine is present on Lys-221.

It belongs to the class-II pyridoxal-phosphate-dependent aminotransferase family. Histidinol-phosphate aminotransferase subfamily. Homodimer. Requires pyridoxal 5'-phosphate as cofactor.

The enzyme catalyses L-histidinol phosphate + 2-oxoglutarate = 3-(imidazol-4-yl)-2-oxopropyl phosphate + L-glutamate. It participates in amino-acid biosynthesis; L-histidine biosynthesis; L-histidine from 5-phospho-alpha-D-ribose 1-diphosphate: step 7/9. The polypeptide is Histidinol-phosphate aminotransferase (Staphylococcus aureus (strain MRSA252)).